The primary structure comprises 174 residues: MRGLLVATWIFVSVAASATPTTTTKSPPPTTTTLSPQILKAKLPPVVKNATWECGTDEFTKSISEGEIQAKCPKLRDHINSCCLQHDGCYEAQSGQKFCDDTFCSCLERRSRSSKSCHDESAPLFCDLVRTFGDGAYEASGPNASTTEESPAEKDDYDYESHVAGLNATPSSST.

Residues 1–18 (MRGLLVATWIFVSVAASA) form the signal peptide. N-linked (GlcNAc...) asparagine glycosylation is found at asparagine 49 and asparagine 143. A disordered region spans residues 137-174 (YEASGPNASTTEESPAEKDDYDYESHVAGLNATPSSST).

It belongs to the phospholipase A2 family.

It localises to the secreted. The sequence is that of Phospholipase A2-like protein Y52B11A.8 from Caenorhabditis elegans.